The sequence spans 240 residues: UDP-2,3-diacylglucosamine hydrolase (240 aa).

The Mn(2+) site is built by Asp8, His10, Asp41, Asn79, and His114. Residue 79 to 80 (NR) participates in substrate binding. Residues Asp122, Ser160, Asn164, Lys167, and His195 each contribute to the substrate site. Residues His195 and His197 each contribute to the Mn(2+) site.

The protein belongs to the LpxH family. Requires Mn(2+) as cofactor.

It is found in the cell inner membrane. It carries out the reaction UDP-2-N,3-O-bis[(3R)-3-hydroxytetradecanoyl]-alpha-D-glucosamine + H2O = 2-N,3-O-bis[(3R)-3-hydroxytetradecanoyl]-alpha-D-glucosaminyl 1-phosphate + UMP + 2 H(+). It participates in glycolipid biosynthesis; lipid IV(A) biosynthesis; lipid IV(A) from (3R)-3-hydroxytetradecanoyl-[acyl-carrier-protein] and UDP-N-acetyl-alpha-D-glucosamine: step 4/6. Its function is as follows. Hydrolyzes the pyrophosphate bond of UDP-2,3-diacylglucosamine to yield 2,3-diacylglucosamine 1-phosphate (lipid X) and UMP by catalyzing the attack of water at the alpha-P atom. Involved in the biosynthesis of lipid A, a phosphorylated glycolipid that anchors the lipopolysaccharide to the outer membrane of the cell. The chain is UDP-2,3-diacylglucosamine hydrolase from Escherichia coli O17:K52:H18 (strain UMN026 / ExPEC).